A 340-amino-acid chain; its full sequence is MLEIKLSDVSKIISAKLYGDKNFIIKGISSIEDSKPGYISFIYKNKFRKYLPSCKASAIILAKDNLPFCKQFALVVKDPYIAYVKLVKFMYVKKIPKYRIRSTAIVSKKAILGKNIYIGHNTVIESKVKLENNIIIGSGCFIGENTIIGSNTHLWDNTTIHHGTIIGNNCSIQSGSVIGSDGFGYANKNGSWIKIPHLGKVVIGNNVEIGSSTTIDRGSIDNTVIGNGVIIDNQCQIAHNVIIGENTAIAGGVVMAGSLIIGSNCIIGGASVINGHIIICDRVKITGMSMVMRSIKTPGIYSSGVPAQLNKKWKKNTALIMNINKIKKQIKEILKKYKKK.

The active-site Proton acceptor is the His-239.

This sequence belongs to the transferase hexapeptide repeat family. LpxD subfamily. As to quaternary structure, homotrimer.

The catalysed reaction is a UDP-3-O-[(3R)-3-hydroxyacyl]-alpha-D-glucosamine + a (3R)-hydroxyacyl-[ACP] = a UDP-2-N,3-O-bis[(3R)-3-hydroxyacyl]-alpha-D-glucosamine + holo-[ACP] + H(+). It carries out the reaction UDP-3-O-[(3R)-3-hydroxytetradecanoyl]-alpha-D-glucosamine + (3R)-hydroxytetradecanoyl-[ACP] = UDP-2-N,3-O-bis[(3R)-3-hydroxytetradecanoyl]-alpha-D-glucosamine + holo-[ACP] + H(+). It participates in glycolipid biosynthesis; lipid IV(A) biosynthesis; lipid IV(A) from (3R)-3-hydroxytetradecanoyl-[acyl-carrier-protein] and UDP-N-acetyl-alpha-D-glucosamine: step 3/6. Functionally, catalyzes the N-acylation of UDP-3-O-(hydroxytetradecanoyl)glucosamine using 3-hydroxytetradecanoyl-ACP as the acyl donor. Is involved in the biosynthesis of lipid A, a phosphorylated glycolipid that anchors the lipopolysaccharide to the outer membrane of the cell. In Wigglesworthia glossinidia brevipalpis, this protein is UDP-3-O-(3-hydroxymyristoyl)glucosamine N-acyltransferase.